Consider the following 133-residue polypeptide: p53 and DNA damage-regulated protein 1 (133 aa).

Belongs to the prefoldin subunit beta family. In terms of assembly, component of the PAQosome complex which is responsible for the biogenesis of several protein complexes and which consists of R2TP complex members RUVBL1, RUVBL2, RPAP3 and PIH1D1, URI complex members PFDN2, PFDN6, PDRG1, UXT and URI1 as well as ASDURF, POLR2E and DNAAF10/WDR92.

Its subcellular location is the cytoplasm. In terms of biological role, may play a role in chaperone-mediated protein folding. The sequence is that of p53 and DNA damage-regulated protein 1 (PDRG1) from Bos taurus (Bovine).